The primary structure comprises 228 residues: Odorant-binding protein 47 (228 aa).

Disulfide bonds link Cys60/Cys225, Cys73/Cys215, Cys74/Cys204, Cys88/Cys114, Cys110/Cys185, and Cys158/Cys195. N-linked (GlcNAc...) asparagine glycosylation occurs at Asn117.

The protein belongs to the PBP/GOBP family. Post-translationally, glycosylated. In terms of tissue distribution, head without antennae (at protein level).

The protein resides in the secreted. In terms of biological role, present in the aqueous fluid surrounding olfactory sensory dendrites and are thought to aid in the capture and transport of hydrophobic odorants into and through this fluid. Binds N-phenyl-1-naphthylamine, menthol, citronellal, 1-dodecanol, decanal, p-tert-butylbenzophenone, 4-hydroxy-4'-isopropylazobenzene, 2-pyrrolyl-p-methyl-azobenzene and indole. Expressed in mosquito head but barely detectable in antennae, which suggests that it may be present in mouth structures, such as palpi and proboscis, and may have a function in taste. The polypeptide is Odorant-binding protein 47 (Anopheles gambiae (African malaria mosquito)).